A 527-amino-acid chain; its full sequence is MASTSNTFPPSQSNSSNNLPTSRHASIVEMLSTPPLLPHVQVNDTDDKEQPEESTPPTATAAAPGPGCAATPAPLRDEKPQFKLSAVPMTQTPSQCLSCVHAQKWQHIPLSQLIEQNKLIFVPGSISVEEAFNTLIKYHLNSIPVESFPGDMNCFTFDYNDLNSYLLLVLNKITVSNKQLTADCQNGKPVPVGEMVKLTPKNPFYKLPENESLSTVMGILGSGVHRVAITNEEMTKVKGILSQRRLIKYLWDNARSFTSLEPLLNSSLQDLHIGVLNIQSKPTSRQSRVISIQGEEPLIMGLYKMHVERISSIAVIDKQGNLLGNISVTDVKHVTRTSQYPLLHKTCRHFISVILNSRGLETGKDSFPIFHVYPSSSLARTLAKLVATKSHRLWIVQPPESSTSASSTNLTAANTAANAVSATAQSSANGATPMSKSSSSTSLNSHSPLMTAMEDPPSPRSSAIAIPPPSPASSTNTPNLFEKEYRTGKLIGVVSLTDIINLLARKQTGNKEVDPQSARRQRGSIAM.

2 stretches are compositionally biased toward low complexity: residues 1–22 and 55–74; these read MASTSNTFPPSQSNSSNNLPTS and TPPTATAAAPGPGCAATPAP. Positions 1 to 75 are disordered; that stretch reads MASTSNTFPP…PGCAATPAPL (75 aa). Position 94 is a phosphoserine (S94). 4 CBS domains span residues 114–175, 198–256, 283–342, and 443–512; these read IEQN…KITV, LTPK…NARS, TSRQ…QYPL, and LNSH…GNKE. Positions 424–447 are enriched in low complexity; sequence AQSSANGATPMSKSSSSTSLNSHS. Disordered stretches follow at residues 424 to 478 and 508 to 527; these read AQSS…TNTP and TGNKEVDPQSARRQRGSIAM. Phosphoserine is present on residues S458 and S524.

The protein belongs to the SDS23 family.

It localises to the cytoplasm. It is found in the nucleus. In terms of biological role, involved in DNA replication and cell separation during budding. The sequence is that of Protein SDS24 (SDS24) from Saccharomyces cerevisiae (strain YJM789) (Baker's yeast).